Consider the following 341-residue polypeptide: tRNA N6-adenosine threonylcarbamoyltransferase (341 aa).

H111 and H115 together coordinate Fe cation. Residues 134–138 (LVSGG), D167, G180, and N276 each bind substrate. A Fe cation-binding site is contributed by D304.

The protein belongs to the KAE1 / TsaD family. It depends on Fe(2+) as a cofactor.

It localises to the cytoplasm. It carries out the reaction L-threonylcarbamoyladenylate + adenosine(37) in tRNA = N(6)-L-threonylcarbamoyladenosine(37) in tRNA + AMP + H(+). Its function is as follows. Required for the formation of a threonylcarbamoyl group on adenosine at position 37 (t(6)A37) in tRNAs that read codons beginning with adenine. Is involved in the transfer of the threonylcarbamoyl moiety of threonylcarbamoyl-AMP (TC-AMP) to the N6 group of A37, together with TsaE and TsaB. TsaD likely plays a direct catalytic role in this reaction. This chain is tRNA N6-adenosine threonylcarbamoyltransferase, found in Ectopseudomonas mendocina (strain ymp) (Pseudomonas mendocina).